Reading from the N-terminus, the 460-residue chain is CUGBP Elav-like family member 6 (460 aa).

Positions 1-10 (MAAAPGGSAP) are enriched in low complexity. Positions 1-37 (MAAAPGGSAPPAGPSPRLAFSTADSGGGMSGLNPGPA) are disordered. 2 consecutive RRM domains span residues 46 to 127 (IKLF…PAAS) and 134 to 214 (RKLF…LADT). Residues 316-336 (NGFGSLTPQSNGQPGSDTLYN) are disordered. Over residues 319–336 (GSLTPQSNGQPGSDTLYN) the composition is skewed to polar residues. Positions 375-453 (CNLFIYHLPQ…KRLKVQLKRP (79 aa)) constitute an RRM 3 domain.

It belongs to the CELF/BRUNOL family.

It is found in the nucleus. The protein resides in the cytoplasm. In terms of biological role, RNA-binding protein implicated in the regulation of pre-mRNA alternative splicing. Mediates exon inclusion and/or exclusion in pre-mRNA that are subject to tissue-specific and developmentally regulated alternative splicing. Specifically activates exon 5 inclusion of TNNT2 in a muscle-specific splicing enhancer (MSE)-dependent manner. Promotes also exon exclusion of INSR pre-mRNA. The protein is CUGBP Elav-like family member 6 (Celf6) of Mus musculus (Mouse).